Here is a 420-residue protein sequence, read N- to C-terminus: F-box/LRR-repeat protein At2g43260 (420 aa).

In terms of domain architecture, F-box spans 7 to 53; it reads NPNSIDILPELLEEVLLRLPTKSILKCRIVSKQWRSLLESSRFAERH. LRR repeat units lie at residues 112–135 and 226–251; these read QDWI…LNHN and VYRI…QITV.

In Arabidopsis thaliana (Mouse-ear cress), this protein is F-box/LRR-repeat protein At2g43260.